A 178-amino-acid polypeptide reads, in one-letter code: Mediator of RNA polymerase II transcription subunit 31 (178 aa).

Acidic residues predominate over residues 129 to 140; sequence EGQELEESEDEA. The interval 129 to 178 is disordered; that stretch reads EGQELEESEDEADIRQKDTEDEDDEETMKKPDADTAEKNSTTSTVSKKEK. Residues 155–165 are compositionally biased toward basic and acidic residues; that stretch reads TMKKPDADTAE. A compositionally biased stretch (polar residues) spans 166–178; it reads KNSTTSTVSKKEK.

This sequence belongs to the Mediator complex subunit 31 family. As to quaternary structure, component of the Mediator complex.

The protein localises to the nucleus. Functionally, component of the Mediator complex, a coactivator involved in the regulated transcription of nearly all RNA polymerase II-dependent genes. Mediator functions as a bridge to convey information from gene-specific regulatory proteins to the basal RNA polymerase II transcription machinery. Mediator is recruited to promoters by direct interactions with regulatory proteins and serves as a scaffold for the assembly of a functional preinitiation complex with RNA polymerase II and the general transcription factors. This is Mediator of RNA polymerase II transcription subunit 31 from Caenorhabditis elegans.